Reading from the N-terminus, the 225-residue chain is Small ribosomal subunit protein uS3 (225 aa).

Residues 18-87 (VDEYLAKQFY…NPQITVTSVE (70 aa)) enclose the KH type-2 domain.

The protein belongs to the universal ribosomal protein uS3 family. In terms of assembly, part of the 30S ribosomal subunit.

Its function is as follows. Binds the lower part of the 30S subunit head. The chain is Small ribosomal subunit protein uS3 from Sulfurisphaera tokodaii (strain DSM 16993 / JCM 10545 / NBRC 100140 / 7) (Sulfolobus tokodaii).